The sequence spans 334 residues: Holliday junction branch migration complex subunit RuvB (334 aa).

The tract at residues 4–184 (ADRLIQPQLQ…FGIPLRLEFY (181 aa)) is large ATPase domain (RuvB-L). ATP-binding positions include arginine 24, glycine 65, lysine 68, threonine 69, threonine 70, 131 to 133 (EDY), arginine 174, tyrosine 184, and arginine 221. Threonine 69 is a Mg(2+) binding site. The small ATPAse domain (RuvB-S) stretch occupies residues 185–255 (NIKDLSTIVT…VADHALDLLD (71 aa)). A head domain (RuvB-H) region spans residues 258 to 334 (NEGFDYMDRK…YQHFQLIKPE (77 aa)). DNA contacts are provided by arginine 294, arginine 313, and arginine 318.

This sequence belongs to the RuvB family. As to quaternary structure, homohexamer. Forms an RuvA(8)-RuvB(12)-Holliday junction (HJ) complex. HJ DNA is sandwiched between 2 RuvA tetramers; dsDNA enters through RuvA and exits via RuvB. An RuvB hexamer assembles on each DNA strand where it exits the tetramer. Each RuvB hexamer is contacted by two RuvA subunits (via domain III) on 2 adjacent RuvB subunits; this complex drives branch migration. In the full resolvosome a probable DNA-RuvA(4)-RuvB(12)-RuvC(2) complex forms which resolves the HJ.

It localises to the cytoplasm. It carries out the reaction ATP + H2O = ADP + phosphate + H(+). Its function is as follows. The RuvA-RuvB-RuvC complex processes Holliday junction (HJ) DNA during genetic recombination and DNA repair, while the RuvA-RuvB complex plays an important role in the rescue of blocked DNA replication forks via replication fork reversal (RFR). RuvA specifically binds to HJ cruciform DNA, conferring on it an open structure. The RuvB hexamer acts as an ATP-dependent pump, pulling dsDNA into and through the RuvAB complex. RuvB forms 2 homohexamers on either side of HJ DNA bound by 1 or 2 RuvA tetramers; 4 subunits per hexamer contact DNA at a time. Coordinated motions by a converter formed by DNA-disengaged RuvB subunits stimulates ATP hydrolysis and nucleotide exchange. Immobilization of the converter enables RuvB to convert the ATP-contained energy into a lever motion, pulling 2 nucleotides of DNA out of the RuvA tetramer per ATP hydrolyzed, thus driving DNA branch migration. The RuvB motors rotate together with the DNA substrate, which together with the progressing nucleotide cycle form the mechanistic basis for DNA recombination by continuous HJ branch migration. Branch migration allows RuvC to scan DNA until it finds its consensus sequence, where it cleaves and resolves cruciform DNA. This is Holliday junction branch migration complex subunit RuvB from Shewanella putrefaciens (strain CN-32 / ATCC BAA-453).